A 470-amino-acid chain; its full sequence is ADAM DEC1 (470 aa).

An N-terminal signal peptide occupies residues 1–30 (MLRGISQLPAVATMSWVLLPVLWLIVQTQA). The propeptide occupies 31-205 (IAIKQTPELT…QGPIRISRSL (175 aa)). N61 is a glycosylation site (N-linked (GlcNAc...) asparagine). The disordered stretch occupies residues 173-200 (FTSNQEEQDPANHTCGVKSTDGKQGPIR). A glycan (N-linked (GlcNAc...) (complex) asparagine) is linked at N184. Residues 218–412 (KYIDLYLVLD…QKPKCLLQAP (195 aa)) enclose the Peptidase M12B domain. N237 is a glycosylation site (N-linked (GlcNAc...) asparagine). 2 disulfides stabilise this stretch: C328–C407 and C369–C374. Residue H352 coordinates Zn(2+). The active site involves E353. Zn(2+)-binding residues include H356 and D362. In terms of domain architecture, Disintegrin spans 420–470 (TPVCGNHLLEVGEDCDCGSPKECTNLCCEALTCKLKPGTDCGGDAPNHTTE). The N-linked (GlcNAc...) asparagine glycan is linked to N466.

Zn(2+) is required as a cofactor. As to expression, expressed highly in the small intestine and appendix, moderately in lymph node, mucosal lining of the colon, thymus, spleen and very weakly in the bone marrow. Predominantly expressed in dendritic cells (DC) of the germinal center. Weakly expressed in monocyte and highly expressed in macrophage. Absent in immature DC.

The protein localises to the secreted. Its function is as follows. May play an important role in the control of the immune response and during pregnancy. The polypeptide is ADAM DEC1 (ADAMDEC1) (Homo sapiens (Human)).